The chain runs to 391 residues: Somatostatin receptor type 1 (391 aa).

Residues 1-50 (MFPNGTAPSPTSSPSSSPGGCGEGVCSRGPGSGAADGMEEPGRNSSQNGT) are disordered. At 1–56 (MFPNGTAPSPTSSPSSSPGGCGEGVCSRGPGSGAADGMEEPGRNSSQNGTLSEGQG) the chain is on the extracellular side. Asn-4 carries an N-linked (GlcNAc...) asparagine glycan. Over residues 8–18 (PSPTSSPSSSP) the composition is skewed to low complexity. N-linked (GlcNAc...) asparagine glycans are attached at residues Asn-44 and Asn-48. A helical transmembrane segment spans residues 57–84 (SAILISFIYSVVCLVGLCGNSMVIYVIL). Over 85–94 (RYAKMKTATN) the chain is Cytoplasmic. Residues 95 to 120 (IYILNLAIADELLMLSVPFLVTSTLL) form a helical membrane-spanning segment. Topologically, residues 121-131 (RHWPFGALLCR) are extracellular. An intrachain disulfide couples Cys-130 to Cys-208. A helical membrane pass occupies residues 132–153 (LVLSVDAVNMFTSIYCLTVLSV). The Cytoplasmic segment spans residues 154–175 (DRYVAVVHPIKAARYRRPTVAK). Residues 176–196 (VVNLGVWVLSLLVILPIVVFS) form a helical membrane-spanning segment. The Extracellular segment spans residues 197 to 219 (RTAANSDGTVACNMLMPEPAQRW). The chain crosses the membrane as a helical span at residues 220–244 (LVGFVLYTFLMGFLLPVGAICLCYV). At 245-270 (LIIAKMRMVALKAGWQQRKRSERKIT) the chain is on the cytoplasmic side. A helical membrane pass occupies residues 271-296 (LMVMMVVMVFVICWMPFYVVQLVNVF). Residues 297 to 303 (AEQDDAT) lie on the Extracellular side of the membrane. The helical transmembrane segment at 304–327 (VSQLSVILGYANSCANPILYGFLS) threads the bilayer. Topologically, residues 328–391 (DNFKRSFQRI…GTCASRISTL (64 aa)) are cytoplasmic. Cys-339 is lipidated: S-palmitoyl cysteine.

The protein belongs to the G-protein coupled receptor 1 family. As to expression, brain, pituitary, islet, jejunum, stomach, heart, spleen.

Its subcellular location is the cell membrane. Receptor for somatostatin with higher affinity for somatostatin-14 than -28. This receptor is coupled to phosphotyrosine phosphatase and Na(+)/H(+) exchanger via pertussis toxin insensitive G proteins. The sequence is that of Somatostatin receptor type 1 (Sstr1) from Rattus norvegicus (Rat).